A 184-amino-acid chain; its full sequence is GTP cyclohydrolase 1 (184 aa).

Zn(2+)-binding residues include cysteine 75, histidine 78, and cysteine 146.

Belongs to the GTP cyclohydrolase I family. Toroid-shaped homodecamer, composed of two pentamers of five dimers.

The catalysed reaction is GTP + H2O = 7,8-dihydroneopterin 3'-triphosphate + formate + H(+). Its pathway is cofactor biosynthesis; 7,8-dihydroneopterin triphosphate biosynthesis; 7,8-dihydroneopterin triphosphate from GTP: step 1/1. This is GTP cyclohydrolase 1 from Pseudoalteromonas translucida (strain TAC 125).